The following is a 455-amino-acid chain: Hexokinase-2 (455 aa).

The Hexokinase domain occupies 3–445 (ANFQQAVKKL…SGIGAALCAL (443 aa)). Residues 57-195 (TGAETGDFLA…NLPIRIEAVI (139 aa)) are hexokinase small subdomain. 68–73 (DFGGTN) is a binding site for ATP. Substrate is bound by residues 144–145 (SY), 161–162 (TK), and 196–197 (ND). The segment at 196–434 (NDTVGTLVTR…KLISIGIAKD (239 aa)) is hexokinase large subdomain. Residue Thr222 participates in ATP binding. Substrate-binding residues include Asn225, Glu252, and Glu283. ATP is bound by residues 288 to 289 (GM), 325 to 329 (TSVLS), and 400 to 404 (SLVEH).

The protein belongs to the hexokinase family. Monomer.

It carries out the reaction a D-hexose + ATP = a D-hexose 6-phosphate + ADP + H(+). The enzyme catalyses D-mannose + ATP = D-mannose 6-phosphate + ADP + H(+). The catalysed reaction is D-fructose + ATP = D-fructose 6-phosphate + ADP + H(+). It catalyses the reaction D-glucose + ATP = D-glucose 6-phosphate + ADP + H(+). It functions in the pathway carbohydrate metabolism; hexose metabolism. It participates in carbohydrate degradation; glycolysis; D-glyceraldehyde 3-phosphate and glycerone phosphate from D-glucose: step 1/4. Its function is as follows. Catalyzes the phosphorylation of hexose (six-carbon sugars) to hexose 6-phosphate. Phosphorylates D-glucose, D-fructose and D-mannose. Compared to hxk1, has a much higher affinity for D-glucose. Constitutes the initial enzyme of glycolysis by catalyzing the phosphorylation of glucose to D-glucose 6-phosphate. The protein is Hexokinase-2 of Schizosaccharomyces pombe (strain 972 / ATCC 24843) (Fission yeast).